We begin with the raw amino-acid sequence, 528 residues long: Tyrosine--tRNA ligase, cytoplasmic (528 aa).

M1 carries the post-translational modification N-acetylmethionine. G2 carries the post-translational modification N-acetylglycine; in Tyrosine--tRNA ligase, cytoplasmic, N-terminally processed. Y39 provides a ligand contact to L-tyrosine. Position 39 (Y39) interacts with trans-resveratrol. The short motif at 44 to 52 (TTGKPHVAY) is the 'HIGH' region element. The L-tyrosine site is built by Y166, Q170, D173, and Q188. Trans-resveratrol contacts are provided by Q170 and D173. An N6-acetyllysine modification is found at K197. S205 is modified (phosphoserine). An N6-acetyllysine modification is found at K206. The 'KMSKS' region motif lies at 222–226 (KMSSS). A Nuclear localization signal motif is present at residues 242 to 247 (KKKLKK). The tract at residues 339-363 (AAYPDPSKQKPTAKGPAKSSEPEEI) is disordered. The tRNA-binding domain occupies 364–468 (IPSRLDIRVG…AGSAPGERVF (105 aa)). S386 is modified (phosphoserine). K474, K482, and K490 each carry N6-acetyllysine.

Belongs to the class-I aminoacyl-tRNA synthetase family. As to quaternary structure, homodimer. Interacts (when binding to resveratrol) with PARP1; interaction stimulates the poly-ADP-ribosyltransferase activity of PARP1.

Its subcellular location is the cytoplasm. The protein resides in the nucleus. The enzyme catalyses tRNA(Tyr) + L-tyrosine + ATP = L-tyrosyl-tRNA(Tyr) + AMP + diphosphate + H(+). With respect to regulation, resveratrol strongly inhibits the tyrosine--tRNA ligase activity. In terms of biological role, tyrosine--tRNA ligase that catalyzes the attachment of tyrosine to tRNA(Tyr) in a two-step reaction: tyrosine is first activated by ATP to form Tyr-AMP and then transferred to the acceptor end of tRNA(Tyr). Also acts as a positive regulator of poly-ADP-ribosylation in the nucleus, independently of its tyrosine--tRNA ligase activity. Activity is switched upon resveratrol-binding: resveratrol strongly inhibits the tyrosine--tRNA ligase activity and promotes relocalization to the nucleus, where YARS1 specifically stimulates the poly-ADP-ribosyltransferase activity of PARP1. This chain is Tyrosine--tRNA ligase, cytoplasmic (Yars1), found in Rattus norvegicus (Rat).